The primary structure comprises 322 residues: Transaldolase (322 aa).

Lysine 132 serves as the catalytic Schiff-base intermediate with substrate. Residues serine 268 and serine 269 each carry the phosphoserine modification.

Belongs to the transaldolase family. Type 1 subfamily. Homodimer.

It carries out the reaction D-sedoheptulose 7-phosphate + D-glyceraldehyde 3-phosphate = D-erythrose 4-phosphate + beta-D-fructose 6-phosphate. It functions in the pathway carbohydrate degradation; pentose phosphate pathway; D-glyceraldehyde 3-phosphate and beta-D-fructose 6-phosphate from D-ribose 5-phosphate and D-xylulose 5-phosphate (non-oxidative stage): step 2/3. Transaldolase is important for the balance of metabolites in the pentose-phosphate pathway. This is Transaldolase (tal1) from Schizosaccharomyces pombe (strain 972 / ATCC 24843) (Fission yeast).